The sequence spans 290 residues: uncharacterized protein (290 aa).

Residues 30–274 (PTILLLHGFP…YDTGHFALET (245 aa)) enclose the AB hydrolase-1 domain. His269 is a catalytic residue.

This sequence belongs to the DmpD/TodF/XylF esterase family.

This is an uncharacterized protein from Saccharomyces cerevisiae (strain ATCC 204508 / S288c) (Baker's yeast).